The chain runs to 361 residues: Phospho-N-acetylmuramoyl-pentapeptide-transferase (361 aa).

Helical transmembrane passes span 25–45 (RGIL…PAVI), 73–93 (TMGG…WGDL), 98–118 (VWLV…DDWI), 139–159 (IFGL…AAIT), 168–188 (IALP…IVGF), 200–220 (GLAI…AYAS), 237–257 (AGEL…FLWF), 264–284 (VFMG…IAVI), 290–310 (VLVI…IQVV), and 339–359 (VIVR…ATLK).

Belongs to the glycosyltransferase 4 family. MraY subfamily. The cofactor is Mg(2+).

It is found in the cell inner membrane. It catalyses the reaction UDP-N-acetyl-alpha-D-muramoyl-L-alanyl-gamma-D-glutamyl-meso-2,6-diaminopimeloyl-D-alanyl-D-alanine + di-trans,octa-cis-undecaprenyl phosphate = di-trans,octa-cis-undecaprenyl diphospho-N-acetyl-alpha-D-muramoyl-L-alanyl-D-glutamyl-meso-2,6-diaminopimeloyl-D-alanyl-D-alanine + UMP. Its pathway is cell wall biogenesis; peptidoglycan biosynthesis. Functionally, catalyzes the initial step of the lipid cycle reactions in the biosynthesis of the cell wall peptidoglycan: transfers peptidoglycan precursor phospho-MurNAc-pentapeptide from UDP-MurNAc-pentapeptide onto the lipid carrier undecaprenyl phosphate, yielding undecaprenyl-pyrophosphoryl-MurNAc-pentapeptide, known as lipid I. The protein is Phospho-N-acetylmuramoyl-pentapeptide-transferase of Xanthomonas euvesicatoria pv. vesicatoria (strain 85-10) (Xanthomonas campestris pv. vesicatoria).